Here is a 406-residue protein sequence, read N- to C-terminus: Indole-3-pyruvate monooxygenase YUCCA1 (406 aa).

21-26 is a binding site for FAD; that stretch reads GAGPSG. 184 to 189 serves as a coordination point for NADP(+); the sequence is GCGNSG.

This sequence belongs to the FMO family. FAD is required as a cofactor. As to expression, expressed in coleoptile tips, root tips, leaf blade tips, shoot apical meristem, vasculature of stems and flowers.

The enzyme catalyses indole-3-pyruvate + NADPH + O2 + H(+) = (indol-3-yl)acetate + CO2 + NADP(+) + H2O. Functionally, involved in auxin biosynthesis. Converts the indole-3-pyruvic acid (IPA) produced by the TAA family to indole-3-acetic acid (IAA). Functions downstream of TAR2 in auxin biosynthesis. Functions upstream of WOX11, a transcription factor that promotes the development of crown roots. In Oryza sativa subsp. japonica (Rice), this protein is Indole-3-pyruvate monooxygenase YUCCA1.